We begin with the raw amino-acid sequence, 155 residues long: Transcriptional repressor NrdR (155 aa).

Residues cysteine 3 to cysteine 34 fold into a zinc finger. In terms of domain architecture, ATP-cone spans leucine 49 to valine 139.

It belongs to the NrdR family. The cofactor is Zn(2+).

In terms of biological role, negatively regulates transcription of bacterial ribonucleotide reductase nrd genes and operons by binding to NrdR-boxes. This is Transcriptional repressor NrdR from Exiguobacterium sp. (strain ATCC BAA-1283 / AT1b).